Reading from the N-terminus, the 465-residue chain is Cysteine--tRNA ligase (465 aa).

Residue Cys-27 coordinates Zn(2+). Positions Pro-29–Asn-39 match the 'HIGH' region motif. The Zn(2+) site is built by Cys-207, His-232, and Glu-236. Residues Lys-264–Ser-268 carry the 'KMSKS' region motif. Lys-267 lines the ATP pocket.

The protein belongs to the class-I aminoacyl-tRNA synthetase family. In terms of assembly, monomer. The cofactor is Zn(2+).

Its subcellular location is the cytoplasm. It catalyses the reaction tRNA(Cys) + L-cysteine + ATP = L-cysteinyl-tRNA(Cys) + AMP + diphosphate. The polypeptide is Cysteine--tRNA ligase (Clostridium botulinum (strain ATCC 19397 / Type A)).